The primary structure comprises 87 residues: Small ribosomal subunit protein bS20 (87 aa).

Positions 1-25 (MANSAQARKRARQNISHRNRNMSLR) are disordered. Positions 7-20 (ARKRARQNISHRNR) are enriched in basic residues.

It belongs to the bacterial ribosomal protein bS20 family.

Binds directly to 16S ribosomal RNA. The polypeptide is Small ribosomal subunit protein bS20 (Nitrosospira multiformis (strain ATCC 25196 / NCIMB 11849 / C 71)).